Here is a 233-residue protein sequence, read N- to C-terminus: Small ribosomal subunit protein uS3 (233 aa).

The KH type-2 domain occupies Ile-39–Arg-107. Residues Met-212–Pro-222 show a composition bias toward basic and acidic residues. The tract at residues Met-212–Lys-233 is disordered. The span at Lys-224 to Lys-233 shows a compositional bias: basic residues.

The protein belongs to the universal ribosomal protein uS3 family. Part of the 30S ribosomal subunit. Forms a tight complex with proteins S10 and S14.

Functionally, binds the lower part of the 30S subunit head. Binds mRNA in the 70S ribosome, positioning it for translation. In Campylobacter jejuni subsp. doylei (strain ATCC BAA-1458 / RM4099 / 269.97), this protein is Small ribosomal subunit protein uS3.